A 319-amino-acid chain; its full sequence is ATP-dependent 6-phosphofructokinase (319 aa).

Gly11 contacts ATP. 21 to 25 is a binding site for ADP; it reads RAVVR. Residues 72-73 and 102-105 each bind ATP; these read RC and GDGS. A Mg(2+)-binding site is contributed by Asp103. 125–127 contacts substrate; sequence TID. The active-site Proton acceptor is Asp127. Arg154 contributes to the ADP binding site. Residues Arg162 and 169–171 contribute to the substrate site; that span reads MGR. ADP contacts are provided by residues 185–187, Arg211, and 213–215; these read GAE and KKH. Residues Glu222, Arg243, and 249 to 252 each bind substrate; that span reads HVQR.

It belongs to the phosphofructokinase type A (PFKA) family. ATP-dependent PFK group I subfamily. Prokaryotic clade 'B1' sub-subfamily. As to quaternary structure, homotetramer. It depends on Mg(2+) as a cofactor.

It localises to the cytoplasm. The catalysed reaction is beta-D-fructose 6-phosphate + ATP = beta-D-fructose 1,6-bisphosphate + ADP + H(+). Its pathway is carbohydrate degradation; glycolysis; D-glyceraldehyde 3-phosphate and glycerone phosphate from D-glucose: step 3/4. With respect to regulation, allosterically activated by ADP and other diphosphonucleosides, and allosterically inhibited by phosphoenolpyruvate. Functionally, catalyzes the phosphorylation of D-fructose 6-phosphate to fructose 1,6-bisphosphate by ATP, the first committing step of glycolysis. This chain is ATP-dependent 6-phosphofructokinase, found in Bacillus cereus (strain ATCC 14579 / DSM 31 / CCUG 7414 / JCM 2152 / NBRC 15305 / NCIMB 9373 / NCTC 2599 / NRRL B-3711).